A 559-amino-acid chain; its full sequence is BTB/POZ domain-containing protein At5g47800 (559 aa).

The BTB domain maps to 28-96 (NDLVIRINNT…CYDITINLSA (69 aa)). In terms of domain architecture, NPH3 spans 199 to 476 (DWWTEDISDL…VQALFFDQES (278 aa)). Tyrosine 417 bears the Phosphotyrosine mark. Residues 477 to 489 (GSKGASSRSESQE) show a composition bias toward low complexity. Disordered stretches follow at residues 477–502 (GSKG…TDEH) and 524–559 (EGCK…SRDR). Basic and acidic residues-rich tracts occupy residues 492-502 (TRGKETPTDEH) and 524-541 (EGCK…DPKK).

The protein belongs to the NPH3 family.

Its pathway is protein modification; protein ubiquitination. Functionally, may act as a substrate-specific adapter of an E3 ubiquitin-protein ligase complex (CUL3-RBX1-BTB) which mediates the ubiquitination and subsequent proteasomal degradation of target proteins. This is BTB/POZ domain-containing protein At5g47800 from Arabidopsis thaliana (Mouse-ear cress).